Consider the following 235-residue polypeptide: Retron Ec48 transmembrane protein (235 aa).

2 consecutive transmembrane segments (helical) span residues 11-31 (IVGVSSALFLIFSLISLFETI) and 64-84 (AFGWLITTFVTVFGVMIALMT).

It localises to the cell inner membrane. Functionally, membrane component of antiviral defense system Retron Ec48, composed of a non-coding RNA (ncRNA), a reverse transcriptase (RT) and this membrane protein. Expression of this retron confers protection against bacteriophages lambda, T2, T4, T5 and T7. At multiplicity of infection (MOI) of 0.02 cultures grow normally when infected with lambda without collapsing, at MOI 2 cultures enter growth stasis. At MOI 3 cell membranes are permeabilized within 15 minutes of infection but do not lyse, suggesting the phage are not able to finish a replication cycle. Antiviral defense is suppressed by mutations that knockout the lambda gam expression or phage T7 gp5.9 expression; both viral genes inhibit host RecBCD. The Ec48 retron may sense the integrity of the RecBCD enzyme; when RecBCD is perturbed by viral proteins the Ec48 effector (the membrane protein) is activated, leading to abortive infection and bacterial growth arrest. The chain is Retron Ec48 transmembrane protein from Escherichia coli.